We begin with the raw amino-acid sequence, 1335 residues long: Protein SPATA31F1 (1335 aa).

A helical membrane pass occupies residues 8 to 28 (LWEVGYPLYIYGSIFIVIVII). Disordered regions lie at residues 403–424 (ALKA…SGSD), 480–502 (LPKT…MSPS), 972–1002 (VQQN…SGDM), 1019–1141 (PSLE…LQDS), and 1248–1335 (ENVA…GHPT). Residues 414–424 (SGGQDNDSGSD) are compositionally biased toward polar residues. The segment covering 972–1000 (VQQNQKQSNSKAVPQGSAHSVSKISQPSG) has biased composition (polar residues). Composition is skewed to basic and acidic residues over residues 1047–1064 (NRED…REGD), 1071–1083 (STRE…EDQR), and 1129–1139 (PGEKESEKDLQ).

Belongs to the SPATA31 family.

Its subcellular location is the membrane. The protein is Protein SPATA31F1 of Homo sapiens (Human).